We begin with the raw amino-acid sequence, 107 residues long: Late embryogenesis abundant protein M10 (107 aa).

A signal peptide spans 1–19; that stretch reads MGNLMSLVLVALLFSLSLA.

Its function is as follows. May be involved in the acquisition of desiccation tolerance during late phase of embryogenesis. This Arabidopsis thaliana (Mouse-ear cress) protein is Late embryogenesis abundant protein M10.